Consider the following 284-residue polypeptide: Non-selective voltage-gated ion channel VDAC3 (284 aa).

Cysteine 2 carries the N-acetylcysteine modification. The residue at position 4 (threonine 4) is a Phosphothreonine. An N6-acetyllysine mark is found at lysine 12, lysine 15, and lysine 20. Transmembrane regions (beta stranded) follow at residues 26 to 35 and 39 to 48; these read MVKIDLKTKS and VMEFSTSGHA. A Glycyl lysine isopeptide (Lys-Gly) (interchain with G-Cter in ubiquitin) cross-link involves residue lysine 54. 3 consecutive transmembrane segments (beta stranded) span residues 55–65, 70–77, and 81–90; these read ASGNLETKYKV, LTFTQKWN, and TLGTEISWEN. An N6-acetyllysine modification is found at lysine 91. The beta stranded transmembrane segment at 96-105 threads the bilayer; it reads LKLTLDTIFV. Glycyl lysine isopeptide (Lys-Gly) (interchain with G-Cter in ubiquitin) cross-links involve residues lysine 110 and lysine 111. 10 beta stranded membrane-spanning segments follow: residues 112-121, 124-131, 138-146, 151-159, 164-176, 179-186, 190-199, 203-212, 219-228, and 232-239; these read SGKLKASYKR, FSVGSNVD, TIYGWAVLA, LAGYQMSFD, KLSQNNFALGYKA, FQLHTHVN, EFGGSIYQKV, IETSINLAWT, RFGIAAKYML, and TSLSAKVN. Phosphoserine is present on serine 242. NAD(+)-binding positions include 243–245 and 261–265; these read LIG and SALID. A run of 2 beta stranded transmembrane segments spans residues 243 to 252 and 255 to 264; these read LIGLGYTQTL and GVKLTLSALI. Position 267 is an N6-acetyllysine; alternate (lysine 267). A Glycyl lysine isopeptide (Lys-Gly) (interchain with G-Cter in ubiquitin); alternate cross-link involves residue lysine 267. The chain crosses the membrane as a beta stranded span at residues 274-283; that stretch reads HKVGLGFELE.

It belongs to the eukaryotic mitochondrial porin family. In terms of assembly, interacts with ARMC12 in a TBC1D21-dependent manner. Interacts with MISFA. In terms of processing, ubiquitinated by PRKN during mitophagy, leading to its degradation and enhancement of mitophagy. Deubiquitinated by USP30.

The protein resides in the mitochondrion outer membrane. The protein localises to the membrane. It catalyses the reaction chloride(in) = chloride(out). The enzyme catalyses K(+)(in) = K(+)(out). In terms of biological role, non-selective voltage-gated ion channel that mediates the transport of anions and cations through the mitochondrion outer membrane and plasma membrane. Forms a high-conducting channel with a stable open state and a voltage-induced closure with a mild preference for anions over cations. Involved in male fertility and sperm mitochondrial sheath formation. The chain is Non-selective voltage-gated ion channel VDAC3 from Pongo abelii (Sumatran orangutan).